We begin with the raw amino-acid sequence, 327 residues long: PDZ and LIM domain protein 1 (327 aa).

Thr2 bears the N-acetylthreonine mark. The PDZ domain occupies 3–85 (TQQIVLQGPG…NMTLTVSRSE (83 aa)). Phosphoserine is present on residues Ser90 and Ser130. Residue Tyr142 is modified to Phosphotyrosine. The interval 161–186 (VESKTSASGEEANSRPSAQPHPSGGL) is disordered. The 60-residue stretch at 256-315 (PICDKCGTGIVGVFVKLRDHHRHPECYVCTDCGINLKQKGHFFVGDQIYCEKHARERVTP) folds into the LIM zinc-binding domain. Residues Cys258, Cys261, His278, Cys281, Cys284, Cys287, Cys305, and His308 each coordinate Zn(2+). Position 314 is a phosphothreonine (Thr314). Tyr319 is subject to Phosphotyrosine.

In terms of assembly, interacts with ACTN1. Interacts with ACTN2 and ACTN4. Interacts with PDLIM4. Expressed most abundantly in heart, lung and liver, moderately in spleen and skeletal muscle, and at extremely low levels (if at all) in testis and brain tissues.

Its subcellular location is the cytoplasm. The protein resides in the cytoskeleton. It localises to the myofibril. The protein localises to the sarcomere. It is found in the z line. In terms of biological role, cytoskeletal protein that may act as an adapter that brings other proteins (like kinases) to the cytoskeleton. Involved in assembly, disassembly and directioning of stress fibers in fibroblasts. Required for the localization of ACTN1 and PALLD to stress fibers. Required for cell migration and in maintaining cell polarity of fibroblasts. This Rattus norvegicus (Rat) protein is PDZ and LIM domain protein 1 (Pdlim1).